A 446-amino-acid chain; its full sequence is Rhoptry surface protein CERLI1 (446 aa).

One can recognise a C2 domain in the interval 39–208; that stretch reads KPIGQLYRLM…NQTKNNEKIE (170 aa). Residues 252–363 form the PH domain; that stretch reads GYLLHSNFYI…ILVSNYKRER (112 aa).

The protein resides in the cytoplasmic vesicle. It localises to the secretory vesicle. Its subcellular location is the rhoptry membrane. Essential for merozoite invasion of host cells by controlling rhoptry secretion. Binds to phosphatidic acid (PA) and phosphatidylinositol 4,5-bisphosphate (PIP2) lipids and thus, likely contributes to the assembly of the machinery that docks or primes the rhoptry to the parasite cell membrane prior to the fusion with the host cell membrane. This Plasmodium falciparum (isolate 3D7) protein is Rhoptry surface protein CERLI1.